The primary structure comprises 314 residues: tRNA pseudouridine synthase B (314 aa).

The Nucleophile role is filled by aspartate 54.

This sequence belongs to the pseudouridine synthase TruB family. Type 1 subfamily.

The enzyme catalyses uridine(55) in tRNA = pseudouridine(55) in tRNA. Its function is as follows. Responsible for synthesis of pseudouridine from uracil-55 in the psi GC loop of transfer RNAs. This chain is tRNA pseudouridine synthase B, found in Cupriavidus metallidurans (strain ATCC 43123 / DSM 2839 / NBRC 102507 / CH34) (Ralstonia metallidurans).